Here is a 153-residue protein sequence, read N- to C-terminus: Bacteriohemerythrin (153 aa).

Fe cation is bound by residues histidine 21, histidine 57, glutamate 61, histidine 76, histidine 80, histidine 115, and aspartate 120.

This sequence belongs to the hemerythrin family. Monomer.

Oxygen-binding protein. May be involved in a storage mechanism or for delivery to oxygen-requiring enzymes. The oxygen-binding site contains two iron atoms. In Stenotrophomonas maltophilia (strain R551-3), this protein is Bacteriohemerythrin.